The following is a 77-amino-acid chain: Tautomerase PptA (77 aa).

P2 (proton acceptor; via imino nitrogen) is an active-site residue.

Belongs to the 4-oxalocrotonate tautomerase family. PptA subfamily. As to quaternary structure, homodimer.

It is found in the cytoplasm. This chain is Tautomerase PptA, found in Escherichia coli (strain K12 / MC4100 / BW2952).